The primary structure comprises 319 residues: MKRIGVLTSGGDSPGMNAAIRAVVRKAIYHGVEVYGIYHGYAGLIAGNIKKLEVGDVGDIIHRGGTILYTARCPEFKTEEGQKKGIEQLKKHGIEGLVVIGGDGSYQGAKKLTEHGFPCVGVPGTIDNDIPGTDFTIGFDTALNTVIDAIDKIRDTATSHERTYVVEVMGRHAGDIALWSGLAGGAETILIPEADYDMDDIIARLKRGHERGKKHSIIIVAEGVGSGVDFGRQIQEATGFETRVTVLGHVQRGGSPTAFDRVLASRLGARAVELLLEGKGGRCVGIQNNQIVDHDIAEALAKTHTVDQRMYTLSKELSI.

Gly11 lines the ATP pocket. Arg21–Arg25 is a binding site for ADP. ATP is bound by residues Arg72 to Cys73 and Gly102 to Ser105. Residue Asp103 participates in Mg(2+) binding. Thr125–Asp127 provides a ligand contact to substrate. Asp127 (proton acceptor) is an active-site residue. Residue Arg154 coordinates ADP. Residues Arg162 and Met169–Arg171 contribute to the substrate site. ADP-binding positions include Gly185–Glu187, Arg211, and Lys213–His215. Substrate-binding positions include Glu222, Arg243, and His249 to Arg252.

The protein belongs to the phosphofructokinase type A (PFKA) family. ATP-dependent PFK group I subfamily. Prokaryotic clade 'B1' sub-subfamily. Homotetramer. Mg(2+) serves as cofactor.

It is found in the cytoplasm. It carries out the reaction beta-D-fructose 6-phosphate + ATP = beta-D-fructose 1,6-bisphosphate + ADP + H(+). It functions in the pathway carbohydrate degradation; glycolysis; D-glyceraldehyde 3-phosphate and glycerone phosphate from D-glucose: step 3/4. Its activity is regulated as follows. Allosterically activated by ADP and other diphosphonucleosides, and allosterically inhibited by phosphoenolpyruvate. Its function is as follows. Catalyzes the phosphorylation of D-fructose 6-phosphate to fructose 1,6-bisphosphate by ATP, the first committing step of glycolysis. The chain is ATP-dependent 6-phosphofructokinase from Geobacillus kaustophilus (strain HTA426).